Consider the following 47-residue polypeptide: Delta-stichotoxin-Hcr3a (47 aa).

Position 3 is a hydroxyproline (Pro-3). 3 disulfide bridges follow: Cys-4–Cys-44, Cys-6–Cys-34, and Cys-27–Cys-45.

This sequence belongs to the sea anemone sodium channel inhibitory toxin family. Type I subfamily.

It is found in the secreted. It localises to the nematocyst. In terms of biological role, inhibits voltage-gated sodium channels (Nav). The sequence is that of Delta-stichotoxin-Hcr3a from Radianthus crispa (Leathery sea anemone).